Reading from the N-terminus, the 284-residue chain is MLIIETLPLLRQHIRRLRQEGKRVALVPTMGNLHDGHMKLVDEAKARADVVIVSIFVNPMQFDRPDDLVRYPRTLQEDCEKLNKRKVDYVFAPAVEEIYPQGLEGQTYVDVPGLSTMLEGTSRPGHFRGVSTIVSKLFNLIQPDIACFGEKDFQQLALIRKMVADMGYDIEIVGVPIIRAKDGLALSSRNAYLTAEQRKIAPGLYNVMNSIAEKLIAGNRELQEIIAIAEQELNEKGFRADDIQIRDADTLLELTETSKRAVILAAAWLGQARLIDNQSVTLAQ.

30–37 (MGNLHDGH) contributes to the ATP binding site. H37 functions as the Proton donor in the catalytic mechanism. Residue Q61 coordinates (R)-pantoate. Q61 lines the beta-alanine pocket. 149–152 (GEKD) serves as a coordination point for ATP. Q155 provides a ligand contact to (R)-pantoate. ATP contacts are provided by residues I178 and 186–189 (LSSR).

Belongs to the pantothenate synthetase family. In terms of assembly, homodimer.

The protein resides in the cytoplasm. The enzyme catalyses (R)-pantoate + beta-alanine + ATP = (R)-pantothenate + AMP + diphosphate + H(+). Its pathway is cofactor biosynthesis; (R)-pantothenate biosynthesis; (R)-pantothenate from (R)-pantoate and beta-alanine: step 1/1. Its function is as follows. Catalyzes the condensation of pantoate with beta-alanine in an ATP-dependent reaction via a pantoyl-adenylate intermediate. This Salmonella typhi protein is Pantothenate synthetase.